We begin with the raw amino-acid sequence, 345 residues long: MISPVLILFSSFLCHVAIAGRTCPKPDDLPFSTVVPLKTFYEPGEEITYSCKPGYVSRGGMRKFICPLTGLWPINTLKCTPRVCPFAGILENGAVRYTTFEYPNTISFSCNTGFYLNGADSAKCTEEGKWSPELPVCAPIICPPPSIPTFATLRVYKPSAGNNSLYRDTAVFECLPQHAMFGNDTITCTTHGNWTKLPECREVKCPFPSRPDNGFVNYPAKPTLYYKDKATFGCHDGYSLDGPEEIECTKLGNWSAMPSCKASCKVPVKKATVVYQGERVKIQEKFKNGMLHGDKVSFFCKNKEKKCSYTEDAQCIDGTIEVPKCFKEHSSLAFWKTDASDVKPC.

The N-terminal stretch at 1–19 (MISPVLILFSSFLCHVAIA) is a signal peptide. Sushi domains lie at 21 to 81 (RTCP…KCTP), 82 to 139 (RVCP…VCAP), 140 to 202 (IICP…ECRE), and 203 to 262 (VKCP…SCKA). 11 cysteine pairs are disulfide-bonded: C23–C66, C51–C79, C84–C124, C110–C137, C142–C188, C174–C200, C205–C248, C234–C260, C264–C315, C300–C325, and C307–C345. A glycan (O-linked (GalNAc...) threonine) is linked at T33. T149 carries an O-linked (GalNAc...) threonine glycan. N162 is a glycosylation site (N-linked (GlcNAc...) (complex) asparagine). N183 and N193 each carry an N-linked (GlcNAc...) asparagine glycan. Residue N253 is glycosylated (N-linked (GlcNAc...) asparagine). The segment at 263–345 (SCKVPVKKAT…KTDASDVKPC (83 aa)) is sushi-like.

In terms of processing, N- and O-glycosylated. PubMed:6587378 also reports glycosylation on 'Asn-188' for their allele. As to expression, expressed by the liver and secreted in plasma.

The protein localises to the secreted. Its function is as follows. Binds to various kinds of negatively charged substances such as heparin, phospholipids, and dextran sulfate. May prevent activation of the intrinsic blood coagulation cascade by binding to phospholipids on the surface of damaged cells. This chain is Beta-2-glycoprotein 1 (APOH), found in Homo sapiens (Human).